Reading from the N-terminus, the 699-residue chain is Serine/threonine-protein kinase PRR2 (699 aa).

A disordered region spans residues 168-193; it reads SSTKKNLANDISDNKHNNNSSNTIGH. The span at 184 to 193 shows a compositional bias: polar residues; sequence NNNSSNTIGH. The 293-residue stretch at 361–653 folds into the Protein kinase domain; it reads RDLDVVLGEG…INGILQDGWI (293 aa). Residues 367-375 and Lys-390 contribute to the ATP site; that span reads LGEGSGGKV. The active-site Proton acceptor is Asp-484.

This sequence belongs to the protein kinase superfamily. Ser/Thr protein kinase family.

The enzyme catalyses L-seryl-[protein] + ATP = O-phospho-L-seryl-[protein] + ADP + H(+). It carries out the reaction L-threonyl-[protein] + ATP = O-phospho-L-threonyl-[protein] + ADP + H(+). Its function is as follows. Protein kinase that functions as a regulator in the pheromone-induced mating pathway downstream of mitogen-activated protein kinase (MAPK) FUS3. Diminishes transcriptional induction of genes in response to pheromone signaling. The chain is Serine/threonine-protein kinase PRR2 (PRR2) from Saccharomyces cerevisiae (strain ATCC 204508 / S288c) (Baker's yeast).